The primary structure comprises 199 residues: GTP cyclohydrolase-2 (199 aa).

52 to 56 (RMHSE) contributes to the GTP binding site. Positions 57, 68, and 70 each coordinate Zn(2+). Residues glutamine 73, 94-96 (EGR), and threonine 116 each bind GTP. Aspartate 128 (proton acceptor) is an active-site residue. The active-site Nucleophile is arginine 130. Positions 151 and 156 each coordinate GTP.

Belongs to the GTP cyclohydrolase II family. The cofactor is Zn(2+).

The enzyme catalyses GTP + 4 H2O = 2,5-diamino-6-hydroxy-4-(5-phosphoribosylamino)-pyrimidine + formate + 2 phosphate + 3 H(+). It participates in cofactor biosynthesis; riboflavin biosynthesis; 5-amino-6-(D-ribitylamino)uracil from GTP: step 1/4. In terms of biological role, catalyzes the conversion of GTP to 2,5-diamino-6-ribosylamino-4(3H)-pyrimidinone 5'-phosphate (DARP), formate and pyrophosphate. In Aliivibrio fischeri (strain ATCC 700601 / ES114) (Vibrio fischeri), this protein is GTP cyclohydrolase-2.